Here is a 305-residue protein sequence, read N- to C-terminus: HTH-type transcriptional regulator KdgR (305 aa).

Residues 55 to 116 (VSSVLKVFGI…GESEKYSLTL (62 aa)) form the HTH iclR-type domain. Residues 76–95 (ITELSQRVMMSKSTVYRFLQ) constitute a DNA-binding region (H-T-H motif). Residues 131–300 (LIRSADIQMR…ARNISDQMGY (170 aa)) form the IclR-ED domain.

As to quaternary structure, homodimer.

It localises to the cytoplasm. In terms of biological role, transcriptional repressor that negatively regulates the expression of genes involved in pectinolysis and in pectinase secretion. Controls genes involved in pectin catabolism, including the pectinase genes (pelA, pelB, pelC, pelE), genes involved in pectin catabolism (kdgT, ogl, kduI-kdgF) and the outT gene involved in pectinase secretion. Acts by binding directly to KdgR binding sites (KdgR-box) in the gene operator/promoter region. This is HTH-type transcriptional regulator KdgR from Dickeya chrysanthemi (Pectobacterium chrysanthemi).